The following is a 154-amino-acid chain: Minor structural pilin EpdC (154 aa).

The propeptide occupies 1–13; the sequence is MIKMLQLPFNKKG. Residues 14–24 carry the QXSXEXXXL motif; it reads QVSFDFIIAML.

In terms of processing, the N-terminus is cleaved by the prepilin peptidase EppA, which recognizes the class III signal sequence.

It localises to the secreted. It is found in the cell surface. The protein resides in the fimbrium. Minor component of the type IV-like pili. Essential for pili formation. In Methanococcus maripaludis (strain DSM 14266 / JCM 13030 / NBRC 101832 / S2 / LL), this protein is Minor structural pilin EpdC.